Consider the following 1614-residue polypeptide: Adenylate cyclase type 10 (1614 aa).

Guanylate cyclase domains lie at 42–179 (VLMF…RLAQ) and 293–418 (TIVF…ARMM). Residues D47 and I48 each contribute to the Mg(2+) site. 47–52 (DISGFT) is a binding site for ATP. K95 is a hydrogencarbonate binding site. D99 is a Mg(2+) binding site. ATP is bound by residues D99 and K144. The hydrogencarbonate site is built by V167, R176, and M337. ATP is bound by residues V406 and 412-416 (NIAAR).

Belongs to the adenylyl cyclase class-4/guanylyl cyclase family. Requires Mg(2+) as cofactor. It depends on Mn(2+) as a cofactor. Expressed in testis.

The protein localises to the cell membrane. It localises to the cytoplasm. The protein resides in the cytoskeleton. It is found in the perinuclear region. Its subcellular location is the nucleus. The protein localises to the cell projection. It localises to the cilium. The protein resides in the mitochondrion. The enzyme catalyses ATP = 3',5'-cyclic AMP + diphosphate. With respect to regulation, activated by manganese or magnesium ions. In the presence of magnesium ions, the enzyme is activated by bicarbonate. Calcium mildly increases the enzyme activity, also in the presence of magnesium ions. Catalyzes the formation of the signaling molecule cAMP. May function as sensor that mediates responses to changes in cellular bicarbonate and CO(2) levels. Has a critical role in mammalian spermatogenesis by producing the cAMP which regulates cAMP-responsive nuclear factors indispensable for sperm maturation in the epididymis. Induces capacitation, the maturational process that sperm undergo prior to fertilization. Involved in ciliary beat regulation. The sequence is that of Adenylate cyclase type 10 (Adcy10) from Mus musculus (Mouse).